Consider the following 87-residue polypeptide: MANIKSAKKRIKVTETKTLNNRMIKSALKTVIKKFEAAVAGNNVEEAKTVFVAVTKSLDVAASKGVVHKNMAARKKSRLAAKLNAMA.

Belongs to the bacterial ribosomal protein bS20 family.

In terms of biological role, binds directly to 16S ribosomal RNA. The sequence is that of Small ribosomal subunit protein bS20 from Clostridium botulinum (strain Eklund 17B / Type B).